Here is a 324-residue protein sequence, read N- to C-terminus: tRNA-modifying protein YgfZ (324 aa).

Trp-186 contributes to the folate binding site.

This sequence belongs to the tRNA-modifying YgfZ family.

Its subcellular location is the cytoplasm. Its function is as follows. Folate-binding protein involved in regulating the level of ATP-DnaA and in the modification of some tRNAs. It is probably a key factor in regulatory networks that act via tRNA modification, such as initiation of chromosomal replication. The chain is tRNA-modifying protein YgfZ from Colwellia psychrerythraea (strain 34H / ATCC BAA-681) (Vibrio psychroerythus).